The sequence spans 81 residues: Cytoplasmic envelopment protein 3 (81 aa).

Gly2 carries N-myristoyl glycine; by host lipidation. The Di-leucine-like internalization motif motif lies at 22-23 (LV). An asp/Glu-rich (acidic) region spans residues 41-47 (DFDENVT). The disordered stretch occupies residues 47–81 (TEDADKSTQRRPRVIDVTPKRKPSGKSSHSKCAKC). The span at 66–81 (KRKPSGKSSHSKCAKC) shows a compositional bias: basic residues.

The protein belongs to the herpesviridae cytoplasmic envelopment protein 3 family. Interacts with cytoplasmic envelopment protein 2; this interaction is essential for the proper localization of each protein to the assembly complex and thus for the production of infectious virus. Myristoylation and palmitoylation (probably on one or more of the nearby cysteines at the N-terminus) enable membrane-binding and Golgi apparatus-specific targeting and are essential for efficient packaging. In terms of processing, phosphorylated. Phosphorylation does not seem to be required for recycling to the host Golgi apparatus. Packaging is selective for underphosphorylated forms.

Its subcellular location is the virion tegument. It is found in the virion membrane. The protein localises to the host cell membrane. The protein resides in the host Golgi apparatus membrane. Its function is as follows. Plays an important role in the cytoplasmic envelopment of tegument proteins and capsids during the assembly and egress processes. Also participates in viral entry at the fusion step probably by regulating the core fusion machinery. This is Cytoplasmic envelopment protein 3 from Homo sapiens (Human).